A 247-amino-acid polypeptide reads, in one-letter code: Phosphoglycerate mutase 1 (247 aa).

Residues 8-15 (RHGQSEWN) and 21-22 (TG) contribute to the substrate site. His9 functions as the Tele-phosphohistidine intermediate in the catalytic mechanism. At Ser12 the chain carries Phosphoserine. Lys31 participates in a covalent cross-link: Glycyl lysine isopeptide (Lys-Gly) (interchain with G-Cter in ubiquitin). Tyr49 carries the phosphotyrosine modification. Lys57 participates in a covalent cross-link: Glycyl lysine isopeptide (Lys-Gly) (interchain with G-Cter in ubiquitin). Arg60 serves as a coordination point for substrate. A Glycyl lysine isopeptide (Lys-Gly) (interchain with G-Cter in ubiquitin) cross-link involves residue Lys71. The Proton donor/acceptor role is filled by Glu87. Substrate contacts are provided by residues 87-90 (ERHY), Lys98, and 114-115 (RR). Residues Ser116, Ser127, and Ser128 each carry the phosphoserine modification. Glycyl lysine isopeptide (Lys-Gly) (interchain with G-Cter in ubiquitin) cross-links involve residues Lys139 and Lys175. 183–184 (GN) is a substrate binding site. The residue at position 185 (Ser185) is a Phosphoserine. Lys191 participates in a covalent cross-link: Glycyl lysine isopeptide (Lys-Gly) (interchain with G-Cter in ubiquitin). Position 197 is a phosphoserine (Ser197).

It belongs to the phosphoglycerate mutase family. BPG-dependent PGAM subfamily. As to quaternary structure, homotetramer: dimer of dimers.

Its subcellular location is the cytoplasm. It is found in the mitochondrion outer membrane. It localises to the mitochondrion intermembrane space. It carries out the reaction (2R)-2-phosphoglycerate = (2R)-3-phosphoglycerate. The protein operates within carbohydrate degradation; glycolysis; pyruvate from D-glyceraldehyde 3-phosphate: step 3/5. Inhibited by inositol hexakisphosphate and benzene tri-, tetra- and hexacarboxylates. Interconversion of 3- and 2-phosphoglycerate with 2,3-bisphosphoglycerate as the primer of the reaction. Can also catalyze the reaction of EC 5.4.2.4 (synthase), but with a reduced activity. In Saccharomyces cerevisiae (strain ATCC 204508 / S288c) (Baker's yeast), this protein is Phosphoglycerate mutase 1 (GPM1).